The following is a 53-amino-acid chain: UPF0391 membrane protein BP1737 (53 aa).

The next 2 helical transmembrane spans lie at 5–25 and 30–50; these read AVVF…GIAA and IAKI…LGGV.

Belongs to the UPF0391 family.

It localises to the cell membrane. The polypeptide is UPF0391 membrane protein BP1737 (Bordetella pertussis (strain Tohama I / ATCC BAA-589 / NCTC 13251)).